The sequence spans 193 residues: Orotate phosphoribosyltransferase (193 aa).

A 5-phospho-alpha-D-ribose 1-diphosphate-binding site is contributed by 114 to 122 (EDVITTGGS). Orotate is bound by residues T118 and R146.

This sequence belongs to the purine/pyrimidine phosphoribosyltransferase family. PyrE subfamily. As to quaternary structure, homodimer. The cofactor is Mg(2+).

The enzyme catalyses orotidine 5'-phosphate + diphosphate = orotate + 5-phospho-alpha-D-ribose 1-diphosphate. Its pathway is pyrimidine metabolism; UMP biosynthesis via de novo pathway; UMP from orotate: step 1/2. In terms of biological role, catalyzes the transfer of a ribosyl phosphate group from 5-phosphoribose 1-diphosphate to orotate, leading to the formation of orotidine monophosphate (OMP). This chain is Orotate phosphoribosyltransferase, found in Chlorobium phaeobacteroides (strain DSM 266 / SMG 266 / 2430).